We begin with the raw amino-acid sequence, 547 residues long: Chaperonin GroEL 3 (547 aa).

ATP contacts are provided by residues 30–33 (TLGP), Lys-51, 87–91 (DGTTT), Gly-415, and Asp-496.

It belongs to the chaperonin (HSP60) family. Forms a cylinder of 14 subunits composed of two heptameric rings stacked back-to-back. Interacts with the co-chaperonin GroES.

The protein localises to the cytoplasm. It catalyses the reaction ATP + H2O + a folded polypeptide = ADP + phosphate + an unfolded polypeptide.. Functionally, together with its co-chaperonin GroES, plays an essential role in assisting protein folding. The GroEL-GroES system forms a nano-cage that allows encapsulation of the non-native substrate proteins and provides a physical environment optimized to promote and accelerate protein folding. This Bradyrhizobium sp. (strain ORS 278) protein is Chaperonin GroEL 3.